Reading from the N-terminus, the 194-residue chain is dCTP deaminase, dUMP-forming (194 aa).

DCTP is bound by residues 104-109 (RSSLGR), Asp-122, 130-132 (TLE), Gln-151, Tyr-165, Lys-172, and Gln-176. Catalysis depends on Glu-132, which acts as the Proton donor/acceptor.

This sequence belongs to the dCTP deaminase family. In terms of assembly, homotrimer.

It catalyses the reaction dCTP + 2 H2O = dUMP + NH4(+) + diphosphate. It participates in pyrimidine metabolism; dUMP biosynthesis; dUMP from dCTP: step 1/1. Its function is as follows. Bifunctional enzyme that catalyzes both the deamination of dCTP to dUTP and the hydrolysis of dUTP to dUMP without releasing the toxic dUTP intermediate. This chain is dCTP deaminase, dUMP-forming, found in Dictyoglomus turgidum (strain DSM 6724 / Z-1310).